The sequence spans 359 residues: Magnesium transporter NIPA2 (359 aa).

Residues 1–9 (MSLGRGKYD) are Extracellular-facing. Residues 10 to 30 (FYIGLGLAMTSSIFIGGSFIL) form a helical membrane-spanning segment. The Cytoplasmic segment spans residues 31-56 (KKKGLLRLARKGSMRAGQGGHAYLKE). A helical transmembrane segment spans residues 57-77 (WLWWAGLLSMGAGEVANFAAY). Residue Ala78 is a topological domain, extracellular. A helical transmembrane segment spans residues 79–99 (FAPATLVTPLGALSVLVSAIL). At 100–107 (SSYFLNER) the chain is on the cytoplasmic side. Residues 108-128 (LNLHGKIGCLLSILGSTVMVI) traverse the membrane as a helical segment. Over 129–149 (HAPKEEEIETLNEMSHKLGDP) the chain is Extracellular. A helical membrane pass occupies residues 150–170 (GFVVFATFVVIVALIFIFVVG). Residues 171–175 (PRHGQ) lie on the Cytoplasmic side of the membrane. Residues 176 to 196 (TNILVYITICSVIGAFSVSCV) form a helical membrane-spanning segment. Residues 197-215 (KGLGIAIKELLAGKPVLQH) lie on the Extracellular side of the membrane. A helical membrane pass occupies residues 216–236 (PLAWILLFSLVVCVSTQINYL). Residues 237 to 246 (NRALDIFNTS) lie on the Cytoplasmic side of the membrane. Residues 247–267 (IVTPIYYVFFTTSVLTCSAIL) form a helical membrane-spanning segment. The Extracellular segment spans residues 268 to 278 (FKEWQDMPVDD). The chain crosses the membrane as a helical span at residues 279–299 (VIGTLSGFFTIIVGIFLLHAF). Topologically, residues 300–359 (KDVSFSLASLPVSFRKDEKAMNGNLSSMYEVLNNNEDDLPCGIEHTGENISRRNGNLPSF) are cytoplasmic.

The protein belongs to the NIPA family. Widely expressed. Expressed at high levels in the kidney.

The protein resides in the cell membrane. Its subcellular location is the early endosome. The enzyme catalyses Mg(2+)(in) = Mg(2+)(out). In terms of biological role, acts as a selective Mg(2+) transporter. The polypeptide is Magnesium transporter NIPA2 (Nipa2) (Mus musculus (Mouse)).